The sequence spans 92 residues: Small ribosomal subunit protein uS19 (92 aa).

Belongs to the universal ribosomal protein uS19 family.

Functionally, protein S19 forms a complex with S13 that binds strongly to the 16S ribosomal RNA. This Rhodopseudomonas palustris (strain HaA2) protein is Small ribosomal subunit protein uS19.